The following is a 133-amino-acid chain: UPF0102 protein AB57_1130 (133 aa).

It belongs to the UPF0102 family.

The polypeptide is UPF0102 protein AB57_1130 (Acinetobacter baumannii (strain AB0057)).